A 114-amino-acid chain; its full sequence is Hemerythrin subunit 2 (114 aa).

Residues His26, His55, Glu59, His74, His78, His102, and Asp107 each contribute to the Fe cation site.

The protein belongs to the hemerythrin family.

In terms of biological role, hemerythrin is a respiratory protein in blood cells of certain marine worms. The oxygen-binding site in each chain contains two iron atoms. This Golfingia vulgaris (Marine worm) protein is Hemerythrin subunit 2.